Consider the following 135-residue polypeptide: MGLITKIARGLVRGADRMAECTSKLGPNSYNKGRGAKKIGYLTSSGKFVKVREMVPVFVVPDLTGFKLKPYVSYKAPPGTEDPMTAKKLFMETVGPQIEKDLQESTFRPEDLEKYGFEPTQEGKLFKLFPRNYIQ.

The transit peptide at M1 to R13 directs the protein to the mitochondrion.

It belongs to the mitochondrion-specific ribosomal protein mL41 family. Component of the mitochondrial ribosome large subunit (39S) which comprises a 16S rRNA and about 50 distinct proteins.

It localises to the mitochondrion. Component of the mitochondrial ribosome large subunit. Also involved in apoptosis and cell cycle. This is Large ribosomal subunit protein mL41B (mrpl41-b) from Xenopus laevis (African clawed frog).